The sequence spans 504 residues: Maturase K (504 aa).

It belongs to the intron maturase 2 family. MatK subfamily.

It is found in the plastid. Its subcellular location is the chloroplast. Its function is as follows. Usually encoded in the trnK tRNA gene intron. Probably assists in splicing its own and other chloroplast group II introns. The protein is Maturase K of Arabidopsis thaliana (Mouse-ear cress).